The following is a 470-amino-acid chain: Cell division protein FtsP (470 aa).

The segment at residues 1–27 (MSLSRRQFIQASGIALCAGAVPLKASA) is a signal peptide (tat-type signal). Residues 68–164 (WGINGRYLGP…NGLAGMWLVE (97 aa)) form the Plastocyanin-like domain.

Belongs to the FtsP family. Post-translationally, exported by the Tat system. The position of the signal peptide cleavage has been experimentally proven. Can also be exported by the Sec system.

Its subcellular location is the periplasm. Cell division protein that is required for growth during stress conditions. May be involved in protecting or stabilizing the divisomal assembly under conditions of stress. The chain is Cell division protein FtsP from Escherichia coli (strain K12).